The primary structure comprises 443 residues: ASTRA-associated protein 1 (443 aa).

WD repeat units follow at residues 23-67 (YHKR…PITH), 71-110 (EGNSHIIAFWWVETTNVLYILSKDSMLRIFELDSSTQLSI), 258-295 (HYPNPILDMCVSGDELYSCSTDDFITKYKIPVNLQLET), and 318-359 (KVHL…VEQT). The interval 372–391 (SSMGDLTNGSGSNTESSSKS) is disordered. Positions 378 to 391 (TNGSGSNTESSSKS) are enriched in low complexity.

The protein belongs to the WD repeat ASA1 family. Component of the ASTRA chromatin remodeling machinery complex composed of at least RVB1, RVB2, TRA1, TEL2, TTI1 and TTI2.

The protein resides in the nucleus. Component of the ASTRA complex involved in chromatin remodeling. The polypeptide is ASTRA-associated protein 1 (ASA1) (Saccharomyces cerevisiae (strain RM11-1a) (Baker's yeast)).